The sequence spans 307 residues: tRNA dimethylallyltransferase (307 aa).

Position 5 to 12 (5 to 12) interacts with ATP; it reads GPTGTGKS. 7–12 contacts substrate; the sequence is TGTGKS.

Belongs to the IPP transferase family. In terms of assembly, monomer. Requires Mg(2+) as cofactor.

The enzyme catalyses adenosine(37) in tRNA + dimethylallyl diphosphate = N(6)-dimethylallyladenosine(37) in tRNA + diphosphate. Its function is as follows. Catalyzes the transfer of a dimethylallyl group onto the adenine at position 37 in tRNAs that read codons beginning with uridine, leading to the formation of N6-(dimethylallyl)adenosine (i(6)A). This chain is tRNA dimethylallyltransferase, found in Mycobacterium avium (strain 104).